A 59-amino-acid polypeptide reads, in one-letter code: Mu-conotoxin SrVA (59 aa).

A signal peptide spans 1-22; that stretch reads MRCLPVFVILLLLIASAPSVDA. Positions 23–44 are excised as a propeptide; sequence QLKTKDDVPLASFHDNAKGTQH. Intrachain disulfides connect cysteine 51–cysteine 58 and cysteine 52–cysteine 59.

The protein belongs to the conotoxin T superfamily. As to expression, expressed by the venom duct.

It localises to the secreted. In terms of biological role, mu-conotoxins block voltage-gated sodium channels. This peptide inhibits the cardiac sodium channel hNav1.5/SCN5A (33% inhibition at 200 nM, 50% at 400 nM, and 55% at 600 nM). Does not interfere with the voltage-dependence of activation, but affects the voltage-dependence of inactivation of hNav1.5. In vivo, intracranial injection into 9-day-old mice causes transient symptoms, including extension of the body and clockwise and counter-clockwise turns, that last 3 to 4 minutes. Intracranial injection into 16-day-old mice, causes transient symptoms, including agitated breathing and occasional turning followed by scratching and grooming behavior, that last for 15-19 minutes. The polypeptide is Mu-conotoxin SrVA (Conus spurius (Alphabet cone)).